Here is a 559-residue protein sequence, read N- to C-terminus: WD repeat-containing protein JIP5 (559 aa).

9 WD repeats span residues 26–67 (QYSD…NYLQ), 77–116 (ADGK…WKTK), 117–156 (RHKG…VVKK), 162–201 (DNGG…ETNR), 207–247 (NGDD…ESDF), 265–306 (DQED…LEDQ), 313–347 (AKEE…DIKK), 354–394 (RNHS…SEEE), and 428–470 (DSDG…SDDE). 2 disordered regions span residues 386-500 (SRNE…LIGL) and 515-559 (EESE…FEGL). The span at 391–417 (SEEEDDEESESFSDSDSDSDSDSDSDS) shows a compositional bias: acidic residues. Residues 418–428 (DSDRDRDRDSD) show a composition bias toward basic and acidic residues. Residues 482–494 (DMDDIDEGSDSSE) show a composition bias toward acidic residues. The segment covering 520–534 (EGEKLQKKRKNEPSK) has biased composition (basic and acidic residues). Basic residues predominate over residues 535 to 544 (KNTKNLKKVK).

Belongs to the WD repeat WDR55 family.

It is found in the nucleus. It localises to the nucleolus. The chain is WD repeat-containing protein JIP5 (JIP5) from Vanderwaltozyma polyspora (strain ATCC 22028 / DSM 70294 / BCRC 21397 / CBS 2163 / NBRC 10782 / NRRL Y-8283 / UCD 57-17) (Kluyveromyces polysporus).